A 291-amino-acid polypeptide reads, in one-letter code: N-acetylmannosamine kinase (291 aa).

Residues 5 to 12 (AIDIGGTK) and 132 to 139 (GVGGGVVC) contribute to the ATP site. 4 residues coordinate Zn(2+): His156, Cys166, Cys168, and Cys173.

This sequence belongs to the ROK (NagC/XylR) family. NanK subfamily. In terms of assembly, homodimer.

It catalyses the reaction an N-acyl-D-mannosamine + ATP = an N-acyl-D-mannosamine 6-phosphate + ADP + H(+). It functions in the pathway amino-sugar metabolism; N-acetylneuraminate degradation; D-fructose 6-phosphate from N-acetylneuraminate: step 2/5. In terms of biological role, catalyzes the phosphorylation of N-acetylmannosamine (ManNAc) to ManNAc-6-P. The protein is N-acetylmannosamine kinase of Salmonella arizonae (strain ATCC BAA-731 / CDC346-86 / RSK2980).